Consider the following 325-residue polypeptide: Protein FAM50B (325 aa).

An N-acetylalanine modification is found at A2. The tract at residues 137–160 (RRAGNLGKNPDVDTSFLPDRDREE) is disordered.

It belongs to the FAM50 family.

The sequence is that of Protein FAM50B (FAM50B) from Macaca fascicularis (Crab-eating macaque).